The chain runs to 241 residues: Pyridoxal phosphate phosphatase PHOSPHO2 (241 aa).

D8 functions as the Nucleophile in the catalytic mechanism. Mg(2+) contacts are provided by D8 and D10. The active-site Proton donor is the D10. Substrate-binding residues include D19 and D99. D179 contributes to the Mg(2+) binding site.

It belongs to the HAD-like hydrolase superfamily. PHOSPHO family. Mg(2+) is required as a cofactor.

The enzyme catalyses pyridoxal 5'-phosphate + H2O = pyridoxal + phosphate. Its function is as follows. Phosphatase that has high activity toward pyridoxal 5'-phosphate (PLP). Also active at much lower level toward pyrophosphate, phosphoethanolamine (PEA), phosphocholine (PCho), phospho-l-tyrosine, fructose-6-phosphate, p-nitrophenyl phosphate, and h-glycerophosphate. The chain is Pyridoxal phosphate phosphatase PHOSPHO2 (Phospho2) from Mus musculus (Mouse).